The chain runs to 91 residues: Small ribosomal subunit protein uS19 (91 aa).

Belongs to the universal ribosomal protein uS19 family.

Its function is as follows. Protein S19 forms a complex with S13 that binds strongly to the 16S ribosomal RNA. The chain is Small ribosomal subunit protein uS19 from Ralstonia pickettii (strain 12J).